The following is a 449-amino-acid chain: Phosphoglucosamine mutase (449 aa).

Catalysis depends on Ser101, which acts as the Phosphoserine intermediate. Residues Ser101, Asp242, Asp244, and Asp246 each contribute to the Mg(2+) site. Position 101 is a phosphoserine (Ser101).

The protein belongs to the phosphohexose mutase family. Mg(2+) is required as a cofactor. Activated by phosphorylation.

The catalysed reaction is alpha-D-glucosamine 1-phosphate = D-glucosamine 6-phosphate. Catalyzes the conversion of glucosamine-6-phosphate to glucosamine-1-phosphate. The sequence is that of Phosphoglucosamine mutase from Bradyrhizobium sp. (strain ORS 278).